The following is a 664-amino-acid chain: uncharacterized protein (664 aa).

The first 25 residues, 1–25, serve as a signal peptide directing secretion; the sequence is MSWKRYLKWVSFAIIPLLFANTSIK. Residues 625 to 645 traverse the membrane as a helical segment; the sequence is IIVYLIIGFSVLVLFITVFIY.

Belongs to the MG414/MG415 family.

The protein localises to the cell membrane. This is an uncharacterized protein from Mycoplasma genitalium (strain ATCC 33530 / DSM 19775 / NCTC 10195 / G37) (Mycoplasmoides genitalium).